The following is a 344-amino-acid chain: GTPase Obg (344 aa).

The Obg domain maps to 1-159; that stretch reads MKFLDEAKVY…MWLILRLKLI (159 aa). One can recognise an OBG-type G domain in the interval 160–327; the sequence is ADAGLVGLPN…ALRAIQAQLD (168 aa). GTP contacts are provided by residues 166–173, 191–195, 212–215, 279–282, and 308–310; these read GLPNAGKS, FTTLH, DIPG, SKAD, and SAA. Mg(2+) is bound by residues serine 173 and threonine 193.

It belongs to the TRAFAC class OBG-HflX-like GTPase superfamily. OBG GTPase family. In terms of assembly, monomer. Mg(2+) serves as cofactor.

The protein localises to the cytoplasm. Its function is as follows. An essential GTPase which binds GTP, GDP and possibly (p)ppGpp with moderate affinity, with high nucleotide exchange rates and a fairly low GTP hydrolysis rate. Plays a role in control of the cell cycle, stress response, ribosome biogenesis and in those bacteria that undergo differentiation, in morphogenesis control. The sequence is that of GTPase Obg from Methylorubrum populi (strain ATCC BAA-705 / NCIMB 13946 / BJ001) (Methylobacterium populi).